The following is a 375-amino-acid chain: Growth/differentiation factor 8 (375 aa).

An N-terminal signal peptide occupies residues 1-23 (MQKLQLCVYIYLFMLIVAGPVDL). Residues 24 to 266 (NENSEQKENV…VTDTPKRSRR (243 aa)) constitute a propeptide that is removed on maturation. Asn71 is a glycosylation site (N-linked (GlcNAc...) asparagine). Cystine bridges form between Cys272/Cys282, Cys281/Cys340, Cys309/Cys372, and Cys313/Cys374.

It belongs to the TGF-beta family. Homodimer; disulfide-linked. Interacts with WFIKKN2, leading to inhibit its activity. Interacts with FSTL3. In terms of processing, synthesized as large precursor molecule that undergoes proteolytic cleavage to generate an N-terminal propeptide and a disulfide linked C-terminal dimer, which is the biologically active molecule. The circulating form consists of a latent complex of the C-terminal dimer and other proteins, including its propeptide, which maintain the C-terminal dimer in a latent, inactive state. Ligand activation requires additional cleavage of the prodomain by a tolloid-like metalloproteinase.

The protein resides in the secreted. Functionally, acts specifically as a negative regulator of skeletal muscle growth. The chain is Growth/differentiation factor 8 (MSTN) from Papio hamadryas (Hamadryas baboon).